Reading from the N-terminus, the 381-residue chain is Selenoprotein P (381 aa).

An N-terminal signal peptide occupies residues 1–19 (MWRSLGLALALCLLPSGGT). Asn-46 is a glycosylation site (N-linked (GlcNAc...) asparagine). Position 59 (Sec-59) is a non-standard amino acid, selenocysteine. N-linked (GlcNAc...) (complex) asparagine glycosylation is present at Asn-83. Asn-119, Asn-128, and Asn-174 each carry an N-linked (GlcNAc...) asparagine glycan. Residues 200–268 (TPSPHYHHEH…ENRDMPASED (69 aa)) form a disordered region. Residues 204–216 (HYHHEHHHNHGHQ) are compositionally biased toward basic residues. Over residues 218–230 (LGSSELSENQQPG) the composition is skewed to polar residues. A compositionally biased stretch (basic residues) spans 243–255 (LHHHHKHKGQHRQ). A Phosphoserine modification is found at Ser-266. Non-standard amino acids (selenocysteine) are located at Sec-300, Sec-318, and Sec-330. N-linked (GlcNAc...) asparagine glycosylation is present at Asn-338. 6 non-standard amino acids (selenocysteine) are found at residues Sec-345, Sec-352, Sec-367, Sec-369, Sec-376, and Sec-378. The disordered stretch occupies residues 355–381 (SQQLIPTEASASURUKNQAKKUEUPSN).

The protein belongs to the selenoprotein P family. Post-translationally, phosphorylation sites are present in the extracellular medium. Made in the liver and heart and secreted into the plasma. It is also found in the kidney.

The protein resides in the secreted. Its function is as follows. Might be responsible for some of the extracellular antioxidant defense properties of selenium or might be involved in the transport of selenium. May supply selenium to tissues such as brain and testis. The polypeptide is Selenoprotein P (Homo sapiens (Human)).